A 147-amino-acid polypeptide reads, in one-letter code: Hemoglobin subunit beta (147 aa).

The 145-residue stretch at 3-147 (NWTKTEKATI…VMSALGKQYH (145 aa)) folds into the Globin domain. The heme b site is built by His64 and His93.

Belongs to the globin family. As to quaternary structure, heterotetramer of two alpha chains and two beta chains. Red blood cells.

Its function is as follows. Involved in oxygen transport from gills to the various peripheral tissues. In Gymnodraco acuticeps (Antarctic dragonfish), this protein is Hemoglobin subunit beta (hbb).